Consider the following 519-residue polypeptide: Glucose-1-phosphate adenylyltransferase large subunit 2, chloroplastic/amyloplastic (519 aa).

The protein belongs to the bacterial/plant glucose-1-phosphate adenylyltransferase family. Heterotetramer. In terms of tissue distribution, leaves and tubers.

The protein localises to the plastid. It localises to the chloroplast. The protein resides in the amyloplast. It catalyses the reaction alpha-D-glucose 1-phosphate + ATP + H(+) = ADP-alpha-D-glucose + diphosphate. Its pathway is glycan biosynthesis; starch biosynthesis. Activated by 3'phosphoglycerate, inhibited by orthophosphate. Allosteric regulation. Functionally, this protein plays a role in synthesis of starch. It catalyzes the synthesis of the activated glycosyl donor, ADP-glucose from Glc-1-P and ATP. The chain is Glucose-1-phosphate adenylyltransferase large subunit 2, chloroplastic/amyloplastic (AGPS2) from Solanum tuberosum (Potato).